A 51-amino-acid polypeptide reads, in one-letter code: Otoconin-90 (51 aa).

It belongs to the phospholipase A2 family. As to quaternary structure, interacts with OTOL1.

The protein localises to the secreted. Its function is as follows. Major protein of the otoconia, a calcium carbonate structure in the saccule and utricle of the ear. Together with OTOL1, acts as a scaffold for otoconia biomineralization: sequesters calcium and forms interconnecting fibrils between otoconia that are incorporated into the calcium crystal structure. Together with OTOL1, modulates calcite crystal morphology and growth kinetics. It is unlikely that this protein has phospholipase A2 activity. In Cavia porcellus (Guinea pig), this protein is Otoconin-90 (OC90).